The primary structure comprises 209 residues: Superoxide dismutase [Mn/Fe] (209 aa).

Positions 38, 90, 172, and 176 each coordinate Fe(3+). Residues H38, H90, D172, and H176 each coordinate Mn(2+).

The protein belongs to the iron/manganese superoxide dismutase family. Mn(2+) serves as cofactor. Requires Fe(3+) as cofactor.

The enzyme catalyses 2 superoxide + 2 H(+) = H2O2 + O2. Functionally, destroys superoxide anion radicals which are normally produced within the cells and which are toxic to biological systems. Catalyzes the dismutation of superoxide anion radicals into O2 and H2O2 by successive reduction and oxidation of the transition metal ion at the active site. The chain is Superoxide dismutase [Mn/Fe] (sodB) from Rickettsia conorii (strain ATCC VR-613 / Malish 7).